Consider the following 261-residue polypeptide: Putative ketoacyl reductase (261 aa).

NADP(+) contacts are provided by Thr15, Ser16, Ile18, Arg38, Gly39, Asp63, Val64, Asn90, Tyr157, Lys161, Val190, and Thr192. The active-site Proton acceptor is Tyr157.

Belongs to the short-chain dehydrogenases/reductases (SDR) family. In terms of assembly, homotetramer.

The protein operates within antibiotic biosynthesis; actinorhodin biosynthesis. The chain is Putative ketoacyl reductase (actIII) from Streptomyces coelicolor (strain ATCC BAA-471 / A3(2) / M145).